We begin with the raw amino-acid sequence, 524 residues long: Glutamyl-tRNA(Gln) amidotransferase subunit A, mitochondrial (524 aa).

Active-site charge relay system residues include Lys-76 and Ser-171. Ser-195 serves as the catalytic Acyl-ester intermediate.

The protein belongs to the amidase family. GatA subfamily. In terms of assembly, subunit of the heterotrimeric GatCAB amidotransferase (AdT) complex, composed of A (qrsl1), B (gatb) and C (gatc) subunits.

The protein localises to the mitochondrion. It carries out the reaction L-glutamyl-tRNA(Gln) + L-glutamine + ATP + H2O = L-glutaminyl-tRNA(Gln) + L-glutamate + ADP + phosphate + H(+). In terms of biological role, allows the formation of correctly charged Gln-tRNA(Gln) through the transamidation of misacylated Glu-tRNA(Gln) in the mitochondria. The reaction takes place in the presence of glutamine and ATP through an activated gamma-phospho-Glu-tRNA(Gln). The protein is Glutamyl-tRNA(Gln) amidotransferase subunit A, mitochondrial (qrsl1) of Xenopus tropicalis (Western clawed frog).